A 760-amino-acid chain; its full sequence is ATP-dependent RNA helicase dbp7 (760 aa).

Residues 23–34 (KLKGGTWRDRLS) are compositionally biased toward basic and acidic residues. A disordered region spans residues 23 to 129 (KLKGGTWRDR…EPVEDAKPTN (107 aa)). The span at 38-47 (IAQHRTKNPR) shows a compositional bias: basic residues. Residues 58 to 72 (KGPQNPNRIQVSSSR) show a composition bias toward polar residues. The span at 77–94 (QKTDADGDNEKSRHDNKQ) shows a compositional bias: basic and acidic residues. Residues 99–110 (FVSSLFSKNPTP) show a composition bias toward polar residues. Residues 137-166 (DTFTNLGLSPSLAAHLLTKLELKAPTGIQK) carry the Q motif motif. A Helicase ATP-binding domain is found at 170 to 372 (SQLLKEDSDA…EISLKDAVHI (203 aa)). 183 to 190 (AETGSGKT) lines the ATP pocket. The DEAD box motif lies at 308-311 (DEGD). The region spanning 396–609 (QLKQSYAIVA…LTRTTAEDIL (214 aa)) is the Helicase C-terminal domain. 2 disordered regions span residues 453–490 (YRDE…AVAF) and 692–760 (SKIN…FNLA). Positions 456-470 (ESEDEDEEKEDDDED) are enriched in acidic residues. Residues 701–716 (PGDKEAKKDYKAERNT) are compositionally biased toward basic and acidic residues. Polar residues predominate over residues 731–740 (QPSNDATSAA).

This sequence belongs to the DEAD box helicase family. DDX31/DBP7 subfamily.

It localises to the nucleus. The protein localises to the nucleolus. The catalysed reaction is ATP + H2O = ADP + phosphate + H(+). ATP-binding RNA helicase involved in the biogenesis of 60S ribosomal subunits and is required for the normal formation of 25S and 5.8S rRNAs. The chain is ATP-dependent RNA helicase dbp7 (dbp7) from Aspergillus oryzae (strain ATCC 42149 / RIB 40) (Yellow koji mold).